We begin with the raw amino-acid sequence, 307 residues long: N-acetylglucosamine-1-phosphotransferase subunit gamma (307 aa).

Positions 1-24 (MAGRLAGFLMLLGLASQGPAPAYA) are cleaved as a signal peptide. Positions 69–171 (GKCFSLVEST…TFETPLVCHP (103 aa)) constitute an MRH domain. Residues C71 and C84 are joined by a disulfide bond. N-linked (GlcNAc...) asparagine glycans are attached at residues N88 and N115. Cystine bridges form between C129–C157 and C142–C169. The 104-residue stretch at 176 to 279 (VYPTLSEALQ…HTQPTETTHS (104 aa)) folds into the DMAP1-binding domain.

As to quaternary structure, homodimer; disulfide-linked. Hexamer of two alpha (GNPTAB), two beta (GNPTAB) and two gamma (GNPTG) subunits; disulfide-linked. The alpha and/or the beta subunits of the enzyme constitute the catalytic subunits. Cys-245 mediates the formation of the interchain disulfide bond for formation of the homodimer. Cys-142, Cys-157 and Cys-169 are involved in intramolecular disulfide bonds formation. As to expression, widely expressed. Highly expressed in the liver, intestine, brain, thymus, testis and ovary.

It is found in the secreted. Its subcellular location is the golgi apparatus. Its function is as follows. Non-catalytic subunit of the N-acetylglucosamine-1-phosphotransferase complex, an enzyme that catalyzes the formation of mannose 6-phosphate (M6P) markers on high mannose type oligosaccharides in the Golgi apparatus. Binds and presents the high mannose glycans of the acceptor to the catalytic alpha and beta subunits (GNPTAB). Enhances the rate of N-acetylglucosamine-1-phosphate transfer to the oligosaccharides of acid hydrolase acceptors. This chain is N-acetylglucosamine-1-phosphotransferase subunit gamma (Gnptg), found in Mus musculus (Mouse).